Here is a 428-residue protein sequence, read N- to C-terminus: tRNA modification GTPase MnmE (428 aa).

The (6S)-5-formyl-5,6,7,8-tetrahydrofolate site is built by Arg-20, Glu-77, and Lys-117. Residues 213-351 (GFEVAIVGSP…LVSRISDTLR (139 aa)) form the TrmE-type G domain. Residues 223–228 (NVGKST), 242–248 (SEYAGTT), and 267–270 (DTAG) each bind GTP. Mg(2+) is bound by residues Ser-227 and Thr-248. Lys-428 lines the (6S)-5-formyl-5,6,7,8-tetrahydrofolate pocket.

Belongs to the TRAFAC class TrmE-Era-EngA-EngB-Septin-like GTPase superfamily. TrmE GTPase family. As to quaternary structure, homodimer. Heterotetramer of two MnmE and two MnmG subunits. It depends on K(+) as a cofactor.

The protein localises to the cytoplasm. Its function is as follows. Exhibits a very high intrinsic GTPase hydrolysis rate. Involved in the addition of a carboxymethylaminomethyl (cmnm) group at the wobble position (U34) of certain tRNAs, forming tRNA-cmnm(5)s(2)U34. This chain is tRNA modification GTPase MnmE, found in Ruegeria sp. (strain TM1040) (Silicibacter sp.).